Here is a 297-residue protein sequence, read N- to C-terminus: Putative thiosulfate sulfurtransferase SseA (297 aa).

Rhodanese domains follow at residues 31-138 and 168-286; these read GAPG…ETTL and ILGA…VPIV. C245 serves as the catalytic Cysteine persulfide intermediate. Residue R250 coordinates substrate.

The enzyme catalyses thiosulfate + hydrogen cyanide = thiocyanate + sulfite + 2 H(+). This is Putative thiosulfate sulfurtransferase SseA (sseA) from Mycobacterium tuberculosis (strain CDC 1551 / Oshkosh).